We begin with the raw amino-acid sequence, 414 residues long: Transforming growth factor beta-2 proprotein (414 aa).

The signal sequence occupies residues 1-20 (MHYCVLSAFLLLHLVTAALS). N-linked (GlcNAc...) asparagine glycans are attached at residues N72, N140, and N241. Intrachain disulfides connect C309-C318, C317-C380, C346-C411, and C350-C413.

This sequence belongs to the TGF-beta family. In terms of assembly, interacts with the serine proteases, HTRA1 and HTRA3. Interacts with ASPN. Interacts with MFAP5. Interacts with Transforming growth factor beta-2 (TGF-beta-2) chain; interaction is non-covalent and maintains (TGF-beta-2) in a latent state. Interacts with LRRC32/GARP; leading to regulate activation of TGF-beta-2. Interacts with NREP; the interaction results in a decrease in TGFB2 autoinduction. As to quaternary structure, transforming growth factor beta-2: Homodimer; disulfide-linked. Transforming growth factor beta-2: Interacts with TGF-beta receptors (TGFBR1 and TGFBR2), leading to signal transduction. Post-translationally, the precursor proprotein is cleaved in the Golgi apparatus to form Transforming growth factor beta-2 (TGF-beta-2) and Latency-associated peptide (LAP) chains, which remain non-covalently linked, rendering TGF-beta-2 inactive.

It is found in the secreted. It localises to the extracellular space. The protein localises to the extracellular matrix. In terms of biological role, precursor of the Latency-associated peptide (LAP) and Transforming growth factor beta-2 (TGF-beta-2) chains, which constitute the regulatory and active subunit of TGF-beta-2, respectively. Functionally, required to maintain the Transforming growth factor beta-2 (TGF-beta-2) chain in a latent state during storage in extracellular matrix. Associates non-covalently with TGF-beta-2 and regulates its activation via interaction with 'milieu molecules', such as LTBP1 and LRRC32/GARP, that control activation of TGF-beta-2. Its function is as follows. Multifunctional protein that regulates various processes such as angiogenesis and heart development. Activation into mature form follows different steps: following cleavage of the proprotein in the Golgi apparatus, Latency-associated peptide (LAP) and Transforming growth factor beta-2 (TGF-beta-2) chains remain non-covalently linked rendering TGF-beta-2 inactive during storage in extracellular matrix. At the same time, LAP chain interacts with 'milieu molecules', such as LTBP1 and LRRC32/GARP, that control activation of TGF-beta-2 and maintain it in a latent state during storage in extracellular milieus. Once activated following release of LAP, TGF-beta-2 acts by binding to TGF-beta receptors (TGFBR1 and TGFBR2), which transduce signal. The sequence is that of Transforming growth factor beta-2 proprotein (TGFB2) from Mustela putorius furo (European domestic ferret).